The chain runs to 1070 residues: DNA-directed RNA polymerase subunit beta (1070 aa).

It belongs to the RNA polymerase beta chain family. As to quaternary structure, in plastids the minimal PEP RNA polymerase catalytic core is composed of four subunits: alpha, beta, beta', and beta''. When a (nuclear-encoded) sigma factor is associated with the core the holoenzyme is formed, which can initiate transcription.

Its subcellular location is the plastid. It is found in the chloroplast. The enzyme catalyses RNA(n) + a ribonucleoside 5'-triphosphate = RNA(n+1) + diphosphate. Functionally, DNA-dependent RNA polymerase catalyzes the transcription of DNA into RNA using the four ribonucleoside triphosphates as substrates. The chain is DNA-directed RNA polymerase subunit beta from Piper cenocladum (Ant piper).